The chain runs to 484 residues: Arginyl-tRNA--protein transferase 1 (484 aa).

It belongs to the R-transferase family.

It catalyses the reaction an N-terminal L-alpha-aminoacyl-[protein] + L-arginyl-tRNA(Arg) = an N-terminal L-arginyl-L-aminoacyl-[protein] + tRNA(Arg) + H(+). Involved in the post-translational conjugation of arginine to the N-terminal aspartate or glutamate of a protein. This arginylation is required for degradation of the protein via the ubiquitin pathway. Does not arginylate cysteine residues. The protein is Arginyl-tRNA--protein transferase 1 (Ate1) of Drosophila melanogaster (Fruit fly).